Reading from the N-terminus, the 108-residue chain is C-C motif chemokine 19 (108 aa).

Positions 1 to 25 (MAPRVTPLLAFSLLVLWTFPAPTLG) are cleaved as a signal peptide. 2 disulfide bridges follow: cysteine 33/cysteine 59 and cysteine 34/cysteine 75. N-linked (GlcNAc...) asparagine glycosylation is present at asparagine 100.

The protein belongs to the intercrine beta (chemokine CC) family. As to quaternary structure, interacts with TNFAIP6 (via Link domain). In terms of tissue distribution, highly expressed by dendritic cells in mesenteric and peripheral lymph nodes. Significant expression in spleen (T cell zone or periarteriolar lymphatic sheath) and Peyer patches. Low expression in thymus.

The protein localises to the secreted. Its function is as follows. Strongly chemotactic for naive (L-selectinhi) CD4 T-cells and for CD8 T-cells and weakly attractive for resting B-cells and memory (L-selectinlo) CD4 T-cells. May play a role in promoting encounters between recirculating T-cells and dendritic cells and in the migration of activated B-cells into the T-zone of secondary lymphoid tissues. Binds to chemokine receptor CCR7. Binds to atypical chemokine receptor ACKR4 and mediates the recruitment of beta-arrestin (ARRB1/2) to ACKR4. The protein is C-C motif chemokine 19 (Ccl19) of Mus musculus (Mouse).